The primary structure comprises 94 residues: Protein RESPONSE TO LOW SULFUR 1 (94 aa).

The stretch at 8 to 35 (VTVAAEEMDELRRRNIELSREVAEMKTE) forms a coiled coil.

The sequence is that of Protein RESPONSE TO LOW SULFUR 1 from Arabidopsis thaliana (Mouse-ear cress).